A 221-amino-acid chain; its full sequence is Type 3 secretion system stator protein (221 aa).

Belongs to the SctL stator family. As to quaternary structure, the core secretion machinery of the T3SS is composed of approximately 20 different proteins, including cytoplasmic components, a base, an export apparatus and a needle. This subunit is part of the cytosolic complex. Interacts directly with YscN/SctN (T3SS ATPase) and YscQ/SctQ (the major sorting platform component).

The protein localises to the cytoplasm. Component of the type III secretion system (T3SS), also called injectisome, which is used to inject bacterial effector proteins into eukaryotic host cells. Acts as a regulator of the YscN/SctN ATPase activity. The sequence is that of Type 3 secretion system stator protein from Yersinia pestis.